The primary structure comprises 423 residues: COP9 signalosome complex subunit 3 (423 aa).

The region spanning 197–365 is the PCI domain; it reads NFERALYFFE…GMVCFHDNPE (169 aa). Residues 402–423 are disordered; sequence QFVQKSMGTQEDDVGSKTSSYS.

This sequence belongs to the CSN3 family. In terms of assembly, component of the CSN complex, probably composed of cops1, cops2, cops3, cops4, cops5, cops6, cops7, cops8 and cops9.

It localises to the cytoplasm. The protein localises to the nucleus. Functionally, component of the COP9 signalosome complex (CSN), a complex involved in various cellular and developmental processes. The CSN complex is an essential regulator of the ubiquitin (Ubl) conjugation pathway by mediating the deneddylation of the cullin subunits of E3 ligase complexes, leading to modify the Ubl ligase activity. This is COP9 signalosome complex subunit 3 (cops3) from Danio rerio (Zebrafish).